Reading from the N-terminus, the 329-residue chain is Probable ABC transporter permease protein MG188 homolog (329 aa).

6 helical membrane-spanning segments follow: residues 30 to 50 (FLLFCPALLTTFLFTLVPFFL), 96 to 116 (IISLPLTIVLAIIISSAIVFV), 128 to 148 (VFFLPYVTSGVAVSIAFIYIL), 176 to 196 (ALWGILIFGIWKNMAFNVLVI), 234 to 254 (LIFLLTLLILGGMQVFPISLF), and 283 to 303 (NFAGAATLVLFILGVCYGLVL). One can recognise an ABC transmembrane type-1 domain in the interval 88-303 (LRNSFLYSII…ILGVCYGLVL (216 aa)).

This sequence belongs to the binding-protein-dependent transport system permease family. MalFG subfamily.

It localises to the cell membrane. In terms of biological role, probably part of a binding-protein-dependent transport system. Probably responsible for the translocation of the substrate across the membrane. The chain is Probable ABC transporter permease protein MG188 homolog from Mycoplasma pneumoniae (strain ATCC 29342 / M129 / Subtype 1) (Mycoplasmoides pneumoniae).